The primary structure comprises 547 residues: Chaperonin GroEL (547 aa).

Residues 30–33, Lys51, 87–91, Gly415, 479–481, and Asp495 contribute to the ATP site; these read TLGP, DGTTT, and NAA.

The protein belongs to the chaperonin (HSP60) family. As to quaternary structure, forms a cylinder of 14 subunits composed of two heptameric rings stacked back-to-back. Interacts with the co-chaperonin GroES.

It localises to the cytoplasm. The catalysed reaction is ATP + H2O + a folded polypeptide = ADP + phosphate + an unfolded polypeptide.. In terms of biological role, together with its co-chaperonin GroES, plays an essential role in assisting protein folding. The GroEL-GroES system forms a nano-cage that allows encapsulation of the non-native substrate proteins and provides a physical environment optimized to promote and accelerate protein folding. This is Chaperonin GroEL from Cupriavidus necator (strain ATCC 17699 / DSM 428 / KCTC 22496 / NCIMB 10442 / H16 / Stanier 337) (Ralstonia eutropha).